A 373-amino-acid polypeptide reads, in one-letter code: Transaldolase (373 aa).

The active-site Schiff-base intermediate with substrate is the Lys143.

Belongs to the transaldolase family. Type 2 subfamily.

The protein localises to the cytoplasm. The catalysed reaction is D-sedoheptulose 7-phosphate + D-glyceraldehyde 3-phosphate = D-erythrose 4-phosphate + beta-D-fructose 6-phosphate. The protein operates within carbohydrate degradation; pentose phosphate pathway; D-glyceraldehyde 3-phosphate and beta-D-fructose 6-phosphate from D-ribose 5-phosphate and D-xylulose 5-phosphate (non-oxidative stage): step 2/3. In terms of biological role, transaldolase is important for the balance of metabolites in the pentose-phosphate pathway. The chain is Transaldolase from Mycobacterium marinum (strain ATCC BAA-535 / M).